A 76-amino-acid chain; its full sequence is Small ribosomal subunit protein bS18 (76 aa).

The protein belongs to the bacterial ribosomal protein bS18 family. Part of the 30S ribosomal subunit. Forms a tight heterodimer with protein bS6.

In terms of biological role, binds as a heterodimer with protein bS6 to the central domain of the 16S rRNA, where it helps stabilize the platform of the 30S subunit. In Petrotoga mobilis (strain DSM 10674 / SJ95), this protein is Small ribosomal subunit protein bS18.